Consider the following 192-residue polypeptide: Ion-translocating oxidoreductase complex subunit A (192 aa).

Helical transmembrane passes span 5–25, 39–59, 65–85, 102–122, 134–154, and 171–191; these read LLLLISTVLVNNFVLVKFLGL, IGMSMATTFVLTLASILSYLV, LPFDLSYLRTMSFILVIAVVV, ALGIYLPLITTNCAVLGVALL, AIYGFGAALGFSLVLILFSAM, and AIAMITAGLMSLAFMGFTGLV.

The protein belongs to the NqrDE/RnfAE family. The complex is composed of six subunits: RnfA, RnfB, RnfC, RnfD, RnfE and RnfG.

Its subcellular location is the cell inner membrane. Its function is as follows. Part of a membrane-bound complex that couples electron transfer with translocation of ions across the membrane. This chain is Ion-translocating oxidoreductase complex subunit A, found in Shewanella baltica (strain OS185).